The chain runs to 692 residues: Protein arginine N-methyltransferase 7 (692 aa).

SAM-dependent MTase PRMT-type domains lie at 14-345 (SVEW…YCVW) and 358-684 (RVRQ…IIME). Omega-N-methylarginine is present on Arg32. Active-site residues include Glu144 and Glu153.

The protein belongs to the class I-like SAM-binding methyltransferase superfamily. Protein arginine N-methyltransferase family. PRMT7 subfamily. Homodimer and heterodimer. Interacts with CTCFL. Interacts with PRMT5 and SNRPD3.

It localises to the cytoplasm. The protein resides in the cytosol. Its subcellular location is the nucleus. The enzyme catalyses L-arginyl-[protein] + S-adenosyl-L-methionine = N(omega)-methyl-L-arginyl-[protein] + S-adenosyl-L-homocysteine + H(+). Arginine methyltransferase that can both catalyze the formation of omega-N monomethylarginine (MMA) and symmetrical dimethylarginine (sDMA), with a preference for the formation of MMA. Specifically mediates the symmetrical dimethylation of arginine residues in the small nuclear ribonucleoproteins Sm D1 (SNRPD1) and Sm D3 (SNRPD3); such methylation being required for the assembly and biogenesis of snRNP core particles. Specifically mediates the symmetric dimethylation of histone H4 'Arg-3' to form H4R3me2s. Plays a role in gene imprinting by being recruited by CTCFL at the H19 imprinted control region (ICR) and methylating histone H4 to form H4R3me2s, possibly leading to recruit DNA methyltransferases at these sites. May also play a role in embryonic stem cell (ESC) pluripotency. Also able to mediate the arginine methylation of histone H2A and myelin basic protein (MBP) in vitro; the relevance of such results is however unclear in vivo. The chain is Protein arginine N-methyltransferase 7 (PRMT7) from Homo sapiens (Human).